Consider the following 440-residue polypeptide: Xylose isomerase (440 aa).

Active-site residues include His-101 and Asp-104. Residues Glu-232, Glu-268, His-271, Asp-296, Asp-307, Asp-309, and Asp-339 each contribute to the Mg(2+) site.

Belongs to the xylose isomerase family. As to quaternary structure, homotetramer. Requires Mg(2+) as cofactor.

It localises to the cytoplasm. The catalysed reaction is alpha-D-xylose = alpha-D-xylulofuranose. This chain is Xylose isomerase, found in Escherichia coli (strain SMS-3-5 / SECEC).